A 225-amino-acid polypeptide reads, in one-letter code: Ribonuclease 3 (225 aa).

The RNase III domain maps to 5–127 (MNKLTSKLGY…IIGAIYLDSD (123 aa)). Glu-40 contributes to the Mg(2+) binding site. Asp-44 is an active-site residue. Mg(2+)-binding residues include Asp-113 and Glu-116. Glu-116 is an active-site residue. One can recognise a DRBM domain in the interval 154–224 (DPKTRLQEFL…AETALEQLTN (71 aa)).

It belongs to the ribonuclease III family. As to quaternary structure, homodimer. Mg(2+) is required as a cofactor.

The protein localises to the cytoplasm. The enzyme catalyses Endonucleolytic cleavage to 5'-phosphomonoester.. Its function is as follows. Digests double-stranded RNA. Involved in the processing of primary rRNA transcript to yield the immediate precursors to the large and small rRNAs (23S and 16S). Processes some mRNAs, and tRNAs when they are encoded in the rRNA operon. Processes pre-crRNA and tracrRNA of type II CRISPR loci if present in the organism. The polypeptide is Ribonuclease 3 (Vibrio cholerae serotype O1 (strain ATCC 39315 / El Tor Inaba N16961)).